Consider the following 298-residue polypeptide: Rhodopsin (298 aa).

Residues 1 to 15 (IHLHWYEYPPMNPMM) are Extracellular-facing. A helical transmembrane segment spans residues 16-40 (YPLLLIFMLFTGILCLAGNFVTIWV). Over 41–52 (FMNTKSLRTPAN) the chain is Cytoplasmic. The chain crosses the membrane as a helical span at residues 53–75 (LLVVNLAMSDFLMMFTMFPPMMV). Over 76–89 (TCYYHTWTLGPTFC) the chain is Extracellular. A disulfide bond links Cys-89 and Cys-166. A helical transmembrane segment spans residues 90–112 (QVYAFLGNLCGCASIWTMVFITF). The 'Ionic lock' involved in activated form stabilization signature appears at 113-115 (DRY). The Cytoplasmic portion of the chain corresponds to 113 to 131 (DRYNVIVKGVAGEPLSTKK). The chain crosses the membrane as a helical span at residues 132 to 152 (ASLWILTIWVLSTTWCMAPFF). The Extracellular segment spans residues 153 to 179 (GWNHYVPEGNLTGCGTDYLSEDILSRS). Asn-162 carries an N-linked (GlcNAc...) asparagine glycan. Residues 180 to 201 (YLYVYSTWVYFLPLAITIYCYV) traverse the membrane as a helical segment. The Cytoplasmic portion of the chain corresponds to 202-242 (FIIKAVAAHEKGMRDQAKKMGIKSLRNEEAQKTSAECRLAK). The helical transmembrane segment at 243–264 (IAMTTVALWFIAWTPYLLINWV) threads the bilayer. Over 265–275 (GMFARSYLSPV) the chain is Extracellular. A helical transmembrane segment spans residues 276–297 (YTIWGYVFAKANAVYNPIVYAI). An N6-(retinylidene)lysine modification is found at Lys-285.

Belongs to the G-protein coupled receptor 1 family. Opsin subfamily. As to quaternary structure, homodimer. Interacts with GNAQ. Post-translationally, contains one covalently linked retinal chromophore.

The protein resides in the cell projection. It localises to the rhabdomere membrane. In terms of biological role, photoreceptor required for image-forming vision at low light intensity. Can use both retinal and 3-dehydroretinal as visual pigment. Light-induced isomerization of 11-cis to all-trans retinal triggers a conformational change that activates signaling via G-proteins. Signaling via GNAQ probably mediates the activation of phospholipase C. This is Rhodopsin (RHO) from Procambarus orcinus (Crayfish).